Consider the following 330-residue polypeptide: Lipoyl synthase (330 aa).

[4Fe-4S] cluster-binding residues include Cys77, Cys82, Cys88, Cys103, Cys107, Cys110, and Ser317. Positions 89-306 constitute a Radical SAM core domain; that stretch reads FNHGTATFMI…RSEAERMGFE (218 aa).

The protein belongs to the radical SAM superfamily. Lipoyl synthase family. The cofactor is [4Fe-4S] cluster.

It is found in the cytoplasm. The catalysed reaction is [[Fe-S] cluster scaffold protein carrying a second [4Fe-4S](2+) cluster] + N(6)-octanoyl-L-lysyl-[protein] + 2 oxidized [2Fe-2S]-[ferredoxin] + 2 S-adenosyl-L-methionine + 4 H(+) = [[Fe-S] cluster scaffold protein] + N(6)-[(R)-dihydrolipoyl]-L-lysyl-[protein] + 4 Fe(3+) + 2 hydrogen sulfide + 2 5'-deoxyadenosine + 2 L-methionine + 2 reduced [2Fe-2S]-[ferredoxin]. It functions in the pathway protein modification; protein lipoylation via endogenous pathway; protein N(6)-(lipoyl)lysine from octanoyl-[acyl-carrier-protein]: step 2/2. Catalyzes the radical-mediated insertion of two sulfur atoms into the C-6 and C-8 positions of the octanoyl moiety bound to the lipoyl domains of lipoate-dependent enzymes, thereby converting the octanoylated domains into lipoylated derivatives. The sequence is that of Lipoyl synthase from Actinobacillus pleuropneumoniae serotype 3 (strain JL03).